A 587-amino-acid polypeptide reads, in one-letter code: MKEFKVTTGPLPGSEKIYVEGERFPFLRVPMRRIRMSDTILENGEREKNEDVVVYDTSGPYTDTSYEVNLHRGVPKIREQWIEDRGDTLRLEGLSSEYGRMRQSDASLEELRYEHVCTRPRAAKDGCATQLYYARQGIVTPEMEFVAIRENQLIDQVRTRYRAEEGEPLGAVIPRKITPEFVRDEIAAGRAILPANINHPESEPMIIGRNFLVKINANIGNSPISSTIEEEVEKAVWAIRWGADTVMDLSTGDHIHETREWIIRNSPVPIGTVPLYQTLEKVQGDVTKLNWEIFRDTLIEQAEQGVDYFTIHAGLRWHHVPLTLRRLTGIVSRGGSIIANWCTTHKRESFIYEHFEEICRILAHYDVAISLGDGLRPGCIHDANDAAQIAELKTLGELTEIAWKYNVQTIIEGPGHVPMHKIRENMEIQLEACHGAPFYTLGPLVSDVASGYDHITSAIGAAQIGWFGTAMLCYVTQKEHLGLPNREDVREGVVTYKLAAHAADLAKGHPTAYWRDYMMSKARFEFRWKDQFHLSLDPEKAIQFHDATLPDEGHKEAHFCSMCGEHFCSMRANKNFRKLLNEEAVSK.

Substrate contacts are provided by residues N218, M247, Y276, H312, 332–334 (SRG), 373–376 (DGLR), and E412. Position 416 (H416) interacts with Zn(2+). Y439 is a substrate binding site. H480 lines the Zn(2+) pocket. Positions 560, 563, and 568 each coordinate [4Fe-4S] cluster.

It belongs to the ThiC family. Requires [4Fe-4S] cluster as cofactor.

The catalysed reaction is 5-amino-1-(5-phospho-beta-D-ribosyl)imidazole + S-adenosyl-L-methionine = 4-amino-2-methyl-5-(phosphooxymethyl)pyrimidine + CO + 5'-deoxyadenosine + formate + L-methionine + 3 H(+). It participates in cofactor biosynthesis; thiamine diphosphate biosynthesis. In terms of biological role, catalyzes the synthesis of the hydroxymethylpyrimidine phosphate (HMP-P) moiety of thiamine from aminoimidazole ribotide (AIR) in a radical S-adenosyl-L-methionine (SAM)-dependent reaction. This is Phosphomethylpyrimidine synthase from Porphyromonas gingivalis (strain ATCC 33277 / DSM 20709 / CIP 103683 / JCM 12257 / NCTC 11834 / 2561).